The chain runs to 828 residues: MEDKNILYESIPTSTNNNELLPLQLIPIKPNITQEEQDLLDNIVKNESIIPMSPKIPININNNNTINNNNNNNSNNVSSGNHITNSNSNSSGNLKDSFDLNSVIDSTCVMTSPIAVSPPIINKLINNKENILNINGILENNINCTNDNQELINILLNKNQLQQQQQQQQQLYLQQQQLQQLQQQIQQIQQQLQQQQQQNSIFRPITPKIIDQQTQPQPQPQTQTTQQPSSQQPFSYEKTPVLASRTISTQKSNSPIPFPNLGTLINDPINSTSSTASNTKSQIPSTPLLVKSTENIQTTPQSNNNDNNDNNNNNNSKNNNNLTDINEDKNNGIEQSSSGNTTTSSITMTAAATTTTTTTTATTATTTTATTTSIKVEPKKKSTSLWSFKTYLYDEIHGGYLSNEANDTLKREQVYNFVHVPWELEKLISFGFLVCFDSFLFLFTFLPIRFFLSFLKFLISPFSKKNKLTTNQIFDLFRGFIWVTCFVFLNFIDSSMLYHYIRGQAVIKLYVIYNVLEVLDKLCCSFGQDIFDSLYWMSFSLTSSNRNRQDGLVPKQRNETRILGPFTHLLVATGYVCLHSLVLFSQVITLNVAINSYNNALLTLMISNQFVELKGSVFKRFEKENLFQISCSDIVERFQAFIFLTIIIFQNLSDLNWDLSWDFAINMLTVVGTVWGSEVLVDAIKHAFITKFNKFSPQMYSKFFVLLSDTIVDPRNRNFTESSWGVNNIIGFVPFPLASIVVRVFHKFIPSKGIFGIFLMVQIYICLVLLKIFIKIIILGQCLSKTTNYDNTTTTILSSSSSSSSSNSLNTTSTTSTSTSTTNDKKNN.

Composition is skewed to low complexity over residues asparagine 67–isoleucine 83, glutamine 212–proline 233, and serine 302–asparagine 321. 3 disordered regions span residues asparagine 67–glycine 92, glutamine 212–tyrosine 236, and glutamine 297–isoleucine 346. The next 5 membrane-spanning stretches (helical) occupy residues isoleucine 428 to isoleucine 448, glutamine 472 to isoleucine 492, isoleucine 562 to valine 582, serine 722 to valine 742, and isoleucine 754 to isoleucine 774. Low complexity predominate over residues leucine 797–threonine 822. The disordered stretch occupies residues leucine 797–asparagine 828.

Belongs to the TAPT1 family.

The protein localises to the membrane. This Dictyostelium discoideum (Social amoeba) protein is Protein TAPT1 homolog.